The following is a 96-amino-acid chain: Bacterial microcompartment shell protein EutM (96 aa).

Residues 3–87 (ALGMIETRGL…PHGDLEEVFP (85 aa)) form the BMC domain.

The protein belongs to the bacterial microcompartments protein family. As to quaternary structure, homohexamer with a central pore of up to 8.6 Angstroms diameter. The hexamers pack into a two-dimensional array. Interacts with EutQ; a probably cytoplasm-facing helix (Val-49 to Gln-64) interacts with N-terminus of EutQ.

Its subcellular location is the bacterial microcompartment. It participates in amine and polyamine degradation; ethanolamine degradation. Probably a major component of the bacterial microcompartment (BMC) shell dedicated to ethanolamine degradation. Each homohexamer has a central pore with an opening of up to 8.6 Angstroms. A positively-charged funnel leads to the pore from each side of the hexamer. The pore probably allows metabolite passage into and out of the BMC. Expression of eutK, eutL, eutM, eutN, eutS (eutSMNLK) in E.coli leads to formation of a single BMC. Expression alone leads to thick filaments that interfere with cell separation. Coexpression of eutQ with eutSMNLK permits E.coli to make cells with more than one mobile BMC, as is usual in vivo. May play a role in BMC shell biogenesis. Can replace homolog pduA in the pdu operon, cells grow better than wild-type on 1,2-propanediol and vitamin B12. Protein is incorporated into the pdu BMC microcompartment. Its function is as follows. The ethanolamine (EA) catabolic bacterial microcompartment (BMC) probably concentrates low levels of ethanolamine catabolic enzymes, concentrates volatile reaction intermediates, keeps the level of toxic acetaldehyde low, generates enough acetyl-CoA to support cell growth, and maintains a pool of free coenzyme A (CoA) and NAD. Deletion of BMC genes (eutK, eutL, eutM) restores growth of eutD deletions, suggesting there are dedicated pools of coenzyme A (CoA) and NAD in the BMC. In terms of biological role, expression of the eut operon allows this bacteria to use ethanolamine as a carbon, nitrogen and energy source. It relies on cobalamin (vitamin B12) both as a cofactor for the ethanolamine ammonia-lyase (EAL) activity and to induce the operon. EA enhances bacterial survival in macrophages in a concentration-dependent manner, suggesting it is an important nutrient during infection. This is Bacterial microcompartment shell protein EutM from Salmonella typhimurium (strain LT2 / SGSC1412 / ATCC 700720).